We begin with the raw amino-acid sequence, 203 residues long: Small ribosomal subunit protein uS4 (203 aa).

The S4 RNA-binding domain maps to 93–156 (RRLDNVVYRL…LKVPAILEAV (64 aa)).

Belongs to the universal ribosomal protein uS4 family. In terms of assembly, part of the 30S ribosomal subunit. Contacts protein S5. The interaction surface between S4 and S5 is involved in control of translational fidelity.

Functionally, one of the primary rRNA binding proteins, it binds directly to 16S rRNA where it nucleates assembly of the body of the 30S subunit. With S5 and S12 plays an important role in translational accuracy. The polypeptide is Small ribosomal subunit protein uS4 (Streptococcus pneumoniae serotype 2 (strain D39 / NCTC 7466)).